The sequence spans 512 residues: Acid-sensing ion channel 2 (512 aa).

At M1–P37 the chain is on the cytoplasmic side. Phosphoserine is present on residues S8 and S11. Residues L38–V58 traverse the membrane as a helical segment. The Extracellular portion of the chain corresponds to E59–A427. Cystine bridges form between C92–C193, C289–C364, C307–C360, C311–C358, C320–C342, and C322–C334. N365 and N392 each carry an N-linked (GlcNAc...) asparagine glycan. A helical transmembrane segment spans residues L428 to L448. Positions G441–S443 match the GAS motif; ion selectivity filter motif. Residues E449–C512 lie on the Cytoplasmic side of the membrane.

It belongs to the amiloride-sensitive sodium channel (TC 1.A.6) family. ASIC2 subfamily. As to quaternary structure, can form homotrimers. Heterotrimer; forms functional heterotrimers producing channel with different properties. Forms heterotrimers with ASIC1; while ASIC1 determines current amplitude, ASIC2 influences the properties of the current. Forms heterotrimers with ASIC3; resulting in channels with distinct properties. Interacts with STOM; STOM regulates the gating of ASIC2-containing channels. Interacts with PICK1; promotes ASIC3 phosphorylation by PKC and activation of ASIC2/ASIC3 heterotrimers. Expressed by sensory neurons. Expressed by nociceptive sensory neurons, spiral ganglion (SG) neurons and the retina (at protein level). Expressed in outer nuclear layer of retina (photoreceptors) and to a lower extent in distal and proximal inner nuclear layer.

The protein localises to the cell membrane. The enzyme catalyses Na(+)(in) = Na(+)(out). It catalyses the reaction K(+)(in) = K(+)(out). The catalysed reaction is Li(+)(in) = Li(+)(out). Its activity is regulated as follows. Inhibited by the diuretic drug amiloride. Forms pH-gated trimeric sodium channels that act as postsynaptic excitatory sensors in the nervous system. Upon extracellular acidification, these channels generate rapid, transient inward currents that fully desensitize. Highly selective for sodium, they are permeable to other cations. By forming heterotrimeric channels with ASIC1, could contribute to synaptic plasticity, learning, and memory. Additionally, as acid sensors at nerve terminals, plays a role in mechanosensation and phototransduction. Its function is as follows. Has no pH-gated sodium channel activity per se but can associate with other ASICs to produce functional channels with specific properties. The protein is Acid-sensing ion channel 2 of Mus musculus (Mouse).